The sequence spans 300 residues: Quinolinate synthase (300 aa).

2 residues coordinate iminosuccinate: His-21 and Ser-38. Cys-83 contacts [4Fe-4S] cluster. Residues 109–111 and Ser-126 contribute to the iminosuccinate site; that span reads YVN. [4Fe-4S] cluster is bound at residue Cys-170. Residues 196 to 198 and Thr-213 each bind iminosuccinate; that span reads HPE. [4Fe-4S] cluster is bound at residue Cys-256.

Belongs to the quinolinate synthase family. Type 2 subfamily. As to quaternary structure, monomer. Homodimer. [4Fe-4S] cluster serves as cofactor.

Its subcellular location is the cytoplasm. It catalyses the reaction iminosuccinate + dihydroxyacetone phosphate = quinolinate + phosphate + 2 H2O + H(+). Its pathway is cofactor biosynthesis; NAD(+) biosynthesis; quinolinate from iminoaspartate: step 1/1. In terms of biological role, catalyzes the condensation of iminoaspartate with dihydroxyacetone phosphate to form quinolinate. The protein is Quinolinate synthase of Pyrococcus horikoshii (strain ATCC 700860 / DSM 12428 / JCM 9974 / NBRC 100139 / OT-3).